Reading from the N-terminus, the 340-residue chain is 4-amino-5-hydroxymethyl-2-methylpyrimidine phosphate synthase THI5 (340 aa).

The residue at position 62 (Lys-62) is an N6-(pyridoxal phosphate)lysine. His-66 is an active-site residue. Position 115 to 118 (115 to 118) interacts with pyridoxal 5'-phosphate; the sequence is GEFG. Positions 195 to 199 match the CCCFC; essential for catalytic activity, may be the site of iron coordination motif; sequence CCCFC.

The protein belongs to the NMT1/THI5 family. In terms of assembly, homodimer. Fe cation is required as a cofactor.

The catalysed reaction is N(6)-(pyridoxal phosphate)-L-lysyl-[4-amino-5-hydroxymethyl-2-methylpyrimidine phosphate synthase] + L-histidyl-[4-amino-5-hydroxymethyl-2-methylpyrimidine phosphate synthase] + 2 Fe(3+) + 4 H2O = L-lysyl-[4-amino-5-hydroxymethyl-2-methylpyrimidine phosphate synthase] + (2S)-2-amino-5-hydroxy-4-oxopentanoyl-[4-amino-5-hydroxymethyl-2-methylpyrimidine phosphate synthase] + 4-amino-2-methyl-5-(phosphooxymethyl)pyrimidine + 3-oxopropanoate + 2 Fe(2+) + 2 H(+). It functions in the pathway cofactor biosynthesis; thiamine diphosphate biosynthesis. Its function is as follows. Responsible for the formation of the pyrimidine heterocycle in the thiamine biosynthesis pathway. Catalyzes the formation of hydroxymethylpyrimidine phosphate (HMP-P) from histidine and pyridoxal phosphate (PLP). The protein uses PLP and the active site histidine to form HMP-P, generating an inactive enzyme. The enzyme can only undergo a single turnover, which suggests it is a suicide enzyme. The sequence is that of 4-amino-5-hydroxymethyl-2-methylpyrimidine phosphate synthase THI5 from Saccharomyces cerevisiae (strain ATCC 204508 / S288c) (Baker's yeast).